The sequence spans 211 residues: FMN-dependent NADH:quinone oxidoreductase 2 (211 aa).

102-105 is an FMN binding site; that stretch reads MWNF.

This sequence belongs to the azoreductase type 1 family. Homodimer. Requires FMN as cofactor.

It catalyses the reaction 2 a quinone + NADH + H(+) = 2 a 1,4-benzosemiquinone + NAD(+). The enzyme catalyses N,N-dimethyl-1,4-phenylenediamine + anthranilate + 2 NAD(+) = 2-(4-dimethylaminophenyl)diazenylbenzoate + 2 NADH + 2 H(+). Functionally, quinone reductase that provides resistance to thiol-specific stress caused by electrophilic quinones. Its function is as follows. Also exhibits azoreductase activity. Catalyzes the reductive cleavage of the azo bond in aromatic azo compounds to the corresponding amines. In Bacillus cereus (strain ATCC 14579 / DSM 31 / CCUG 7414 / JCM 2152 / NBRC 15305 / NCIMB 9373 / NCTC 2599 / NRRL B-3711), this protein is FMN-dependent NADH:quinone oxidoreductase 2.